A 461-amino-acid polypeptide reads, in one-letter code: Fumarate hydratase class II (461 aa).

Substrate is bound by residues 97 to 99 (SGT), 127 to 130 (HPND), 137 to 139 (SSN), and Thr185. His186 functions as the Proton donor/acceptor in the catalytic mechanism. Ser316 is an active-site residue. Substrate is bound by residues Ser317 and 322–324 (KVN).

It belongs to the class-II fumarase/aspartase family. Fumarase subfamily. Homotetramer.

The protein resides in the cytoplasm. It carries out the reaction (S)-malate = fumarate + H2O. Its pathway is carbohydrate metabolism; tricarboxylic acid cycle; (S)-malate from fumarate: step 1/1. In terms of biological role, involved in the TCA cycle. Catalyzes the stereospecific interconversion of fumarate to L-malate. This is Fumarate hydratase class II from Staphylococcus aureus (strain MSSA476).